The following is a 356-amino-acid chain: UDP-N-acetylglucosamine--N-acetylmuramyl-(pentapeptide) pyrophosphoryl-undecaprenol N-acetylglucosamine transferase (356 aa).

Residues Arg-166, Ser-196, and Gln-290 each contribute to the UDP-N-acetyl-alpha-D-glucosamine site.

Belongs to the glycosyltransferase 28 family. MurG subfamily.

It localises to the cell membrane. The enzyme catalyses Mur2Ac(oyl-L-Ala-gamma-D-Glu-L-Lys-D-Ala-D-Ala)-di-trans,octa-cis-undecaprenyl diphosphate + UDP-N-acetyl-alpha-D-glucosamine = beta-D-GlcNAc-(1-&gt;4)-Mur2Ac(oyl-L-Ala-gamma-D-Glu-L-Lys-D-Ala-D-Ala)-di-trans,octa-cis-undecaprenyl diphosphate + UDP + H(+). The protein operates within cell wall biogenesis; peptidoglycan biosynthesis. Its function is as follows. Cell wall formation. Catalyzes the transfer of a GlcNAc subunit on undecaprenyl-pyrophosphoryl-MurNAc-pentapeptide (lipid intermediate I) to form undecaprenyl-pyrophosphoryl-MurNAc-(pentapeptide)GlcNAc (lipid intermediate II). The chain is UDP-N-acetylglucosamine--N-acetylmuramyl-(pentapeptide) pyrophosphoryl-undecaprenol N-acetylglucosamine transferase from Staphylococcus aureus (strain MW2).